We begin with the raw amino-acid sequence, 318 residues long: Transaldolase (318 aa).

Residue Lys131 is the Schiff-base intermediate with substrate of the active site.

The protein belongs to the transaldolase family. Type 1 subfamily. Homodimer.

It is found in the cytoplasm. It carries out the reaction D-sedoheptulose 7-phosphate + D-glyceraldehyde 3-phosphate = D-erythrose 4-phosphate + beta-D-fructose 6-phosphate. The protein operates within carbohydrate degradation; pentose phosphate pathway; D-glyceraldehyde 3-phosphate and beta-D-fructose 6-phosphate from D-ribose 5-phosphate and D-xylulose 5-phosphate (non-oxidative stage): step 2/3. Its function is as follows. Transaldolase is important for the balance of metabolites in the pentose-phosphate pathway. This chain is Transaldolase, found in Buchnera aphidicola subsp. Cinara cedri (strain Cc).